Reading from the N-terminus, the 144-residue chain is MKSYIAKPEEVQRKWYVVDAEGKPLGRVASQVALILRGKNKPTYTPHVDTGDYVVIINAEKVVLTGKKLDQKMLRHHSLYPGGLKEVPYKEALAKKPEFVFEEAVRRMLPKGPLGRKMLKKLKVYRGSEHNNEAQNPEVLELRY.

It belongs to the universal ribosomal protein uL13 family. In terms of assembly, part of the 50S ribosomal subunit.

Functionally, this protein is one of the early assembly proteins of the 50S ribosomal subunit, although it is not seen to bind rRNA by itself. It is important during the early stages of 50S assembly. The chain is Large ribosomal subunit protein uL13 from Clostridium tetani (strain Massachusetts / E88).